Consider the following 376-residue polypeptide: Queuine tRNA-ribosyltransferase (376 aa).

Asp-89 functions as the Proton acceptor in the catalytic mechanism. Residues 89-93 (DSGGF), Asp-143, Gln-194, and Gly-221 each bind substrate. The tract at residues 252 to 258 (GVGTPSN) is RNA binding. Asp-271 (nucleophile) is an active-site residue. The tract at residues 276-280 (ARNGR) is RNA binding; important for wobble base 34 recognition. Cys-309, Cys-311, Cys-314, and His-340 together coordinate Zn(2+).

Belongs to the queuine tRNA-ribosyltransferase family. Homodimer. Within each dimer, one monomer is responsible for RNA recognition and catalysis, while the other monomer binds to the replacement base PreQ1. Zn(2+) serves as cofactor.

The catalysed reaction is 7-aminomethyl-7-carbaguanine + guanosine(34) in tRNA = 7-aminomethyl-7-carbaguanosine(34) in tRNA + guanine. Its pathway is tRNA modification; tRNA-queuosine biosynthesis. Its function is as follows. Catalyzes the base-exchange of a guanine (G) residue with the queuine precursor 7-aminomethyl-7-deazaguanine (PreQ1) at position 34 (anticodon wobble position) in tRNAs with GU(N) anticodons (tRNA-Asp, -Asn, -His and -Tyr). Catalysis occurs through a double-displacement mechanism. The nucleophile active site attacks the C1' of nucleotide 34 to detach the guanine base from the RNA, forming a covalent enzyme-RNA intermediate. The proton acceptor active site deprotonates the incoming PreQ1, allowing a nucleophilic attack on the C1' of the ribose to form the product. After dissociation, two additional enzymatic reactions on the tRNA convert PreQ1 to queuine (Q), resulting in the hypermodified nucleoside queuosine (7-(((4,5-cis-dihydroxy-2-cyclopenten-1-yl)amino)methyl)-7-deazaguanosine). The chain is Queuine tRNA-ribosyltransferase from Clostridium acetobutylicum (strain ATCC 824 / DSM 792 / JCM 1419 / IAM 19013 / LMG 5710 / NBRC 13948 / NRRL B-527 / VKM B-1787 / 2291 / W).